Here is an 88-residue protein sequence, read N- to C-terminus: MANTKSARKSLIKSKQQRKCNASRRSMLRTFIKKVYTAIETKDKTAAMTAFVFMQKKIDHQACKGLIHKNKAARCKSRTFARIRSMGF.

The tract at residues 1–20 (MANTKSARKSLIKSKQQRKC) is disordered.

This sequence belongs to the bacterial ribosomal protein bS20 family.

Functionally, binds directly to 16S ribosomal RNA. The protein is Small ribosomal subunit protein bS20 of Blochmanniella pennsylvanica (strain BPEN).